Reading from the N-terminus, the 459-residue chain is Argininosuccinate lyase (459 aa).

The protein belongs to the lyase 1 family. Argininosuccinate lyase subfamily.

The protein resides in the cytoplasm. It catalyses the reaction 2-(N(omega)-L-arginino)succinate = fumarate + L-arginine. It functions in the pathway amino-acid biosynthesis; L-arginine biosynthesis; L-arginine from L-ornithine and carbamoyl phosphate: step 3/3. The sequence is that of Argininosuccinate lyase from Prochlorococcus marinus (strain MIT 9515).